A 334-amino-acid polypeptide reads, in one-letter code: Holliday junction branch migration complex subunit RuvB (334 aa).

The segment at 4-186 (ADRLIAPENP…FGITQRLEYY (183 aa)) is large ATPase domain (RuvB-L). ATP contacts are provided by residues I25, R26, G67, K70, T71, T72, 133–135 (EDY), R176, Y186, and R223. T71 contacts Mg(2+). The interval 187 to 257 (KIPDLQNIVQ…TADKALNMLD (71 aa)) is small ATPAse domain (RuvB-S). Residues 260 to 334 (SKGFDYMDRK…RAYLHFGIEK (75 aa)) are head domain (RuvB-H). DNA is bound by residues R315 and R320.

This sequence belongs to the RuvB family. As to quaternary structure, homohexamer. Forms an RuvA(8)-RuvB(12)-Holliday junction (HJ) complex. HJ DNA is sandwiched between 2 RuvA tetramers; dsDNA enters through RuvA and exits via RuvB. An RuvB hexamer assembles on each DNA strand where it exits the tetramer. Each RuvB hexamer is contacted by two RuvA subunits (via domain III) on 2 adjacent RuvB subunits; this complex drives branch migration. In the full resolvosome a probable DNA-RuvA(4)-RuvB(12)-RuvC(2) complex forms which resolves the HJ.

The protein resides in the cytoplasm. The enzyme catalyses ATP + H2O = ADP + phosphate + H(+). In terms of biological role, the RuvA-RuvB-RuvC complex processes Holliday junction (HJ) DNA during genetic recombination and DNA repair, while the RuvA-RuvB complex plays an important role in the rescue of blocked DNA replication forks via replication fork reversal (RFR). RuvA specifically binds to HJ cruciform DNA, conferring on it an open structure. The RuvB hexamer acts as an ATP-dependent pump, pulling dsDNA into and through the RuvAB complex. RuvB forms 2 homohexamers on either side of HJ DNA bound by 1 or 2 RuvA tetramers; 4 subunits per hexamer contact DNA at a time. Coordinated motions by a converter formed by DNA-disengaged RuvB subunits stimulates ATP hydrolysis and nucleotide exchange. Immobilization of the converter enables RuvB to convert the ATP-contained energy into a lever motion, pulling 2 nucleotides of DNA out of the RuvA tetramer per ATP hydrolyzed, thus driving DNA branch migration. The RuvB motors rotate together with the DNA substrate, which together with the progressing nucleotide cycle form the mechanistic basis for DNA recombination by continuous HJ branch migration. Branch migration allows RuvC to scan DNA until it finds its consensus sequence, where it cleaves and resolves cruciform DNA. This is Holliday junction branch migration complex subunit RuvB from Vibrio vulnificus (strain YJ016).